We begin with the raw amino-acid sequence, 349 residues long: Protein-glutamate methylesterase/protein-glutamine glutaminase (349 aa).

A Response regulatory domain is found at 5–122 (RVLSVDDSAL…REGMLAYSEM (118 aa)). 4-aspartylphosphate is present on D56. Residues 152 to 344 (LLSSEKLIAI…QQMLAKISAG (193 aa)) enclose the CheB-type methylesterase domain. Active-site residues include S164, H190, and D286.

It belongs to the CheB family. In terms of processing, phosphorylated by CheA. Phosphorylation of the N-terminal regulatory domain activates the methylesterase activity.

The protein resides in the cytoplasm. The enzyme catalyses [protein]-L-glutamate 5-O-methyl ester + H2O = L-glutamyl-[protein] + methanol + H(+). The catalysed reaction is L-glutaminyl-[protein] + H2O = L-glutamyl-[protein] + NH4(+). In terms of biological role, involved in chemotaxis. Part of a chemotaxis signal transduction system that modulates chemotaxis in response to various stimuli. Catalyzes the demethylation of specific methylglutamate residues introduced into the chemoreceptors (methyl-accepting chemotaxis proteins or MCP) by CheR. Also mediates the irreversible deamidation of specific glutamine residues to glutamic acid. This chain is Protein-glutamate methylesterase/protein-glutamine glutaminase, found in Escherichia coli O6:K15:H31 (strain 536 / UPEC).